The chain runs to 193 residues: NADH-quinone oxidoreductase subunit B (193 aa).

The disordered stretch occupies residues 1 to 25; that stretch reads MGLNDSSGTLVAPKPKGIIDPNTGR. Positions 72, 73, 137, and 167 each coordinate [4Fe-4S] cluster.

This sequence belongs to the complex I 20 kDa subunit family. NDH-1 is composed of 14 different subunits. Subunits NuoB, C, D, E, F, and G constitute the peripheral sector of the complex. [4Fe-4S] cluster is required as a cofactor.

The protein localises to the cell inner membrane. The enzyme catalyses a quinone + NADH + 5 H(+)(in) = a quinol + NAD(+) + 4 H(+)(out). Its function is as follows. NDH-1 shuttles electrons from NADH, via FMN and iron-sulfur (Fe-S) centers, to quinones in the respiratory chain. Couples the redox reaction to proton translocation (for every two electrons transferred, four hydrogen ions are translocated across the cytoplasmic membrane), and thus conserves the redox energy in a proton gradient. The sequence is that of NADH-quinone oxidoreductase subunit B from Mesorhizobium japonicum (strain LMG 29417 / CECT 9101 / MAFF 303099) (Mesorhizobium loti (strain MAFF 303099)).